The primary structure comprises 436 residues: Histidine--tRNA ligase (436 aa).

It belongs to the class-II aminoacyl-tRNA synthetase family.

The protein resides in the cytoplasm. It carries out the reaction tRNA(His) + L-histidine + ATP = L-histidyl-tRNA(His) + AMP + diphosphate + H(+). The polypeptide is Histidine--tRNA ligase (Thermococcus kodakarensis (strain ATCC BAA-918 / JCM 12380 / KOD1) (Pyrococcus kodakaraensis (strain KOD1))).